The sequence spans 234 residues: MIELWPAIDLIGSTSVRLTEGKYDSEEKMSRSAEESIAYYSQFECVNRIHIVDLIGAKAQHAREFDYIKSLRRLTTKDIEVGGGIRTKSQIMDYFAAGINYCIVGTKGIQDTEWLKEMAHTFPGRIYLSVDAYGEDIKVNGWEEDTELNLFSFVKQLSDIPIGGIIYTDIAKDGKMSGPNFELTGQLVKATTIPVIASGGIRHQQDIQRLASLNVHAAIIGKAAHQASFWEGLK.

Catalysis depends on aspartate 9, which acts as the Proton acceptor. Aspartate 131 functions as the Proton donor in the catalytic mechanism.

This sequence belongs to the HisA/HisF family.

It is found in the cytoplasm. It carries out the reaction 1-(5-phospho-beta-D-ribosyl)-5-[(5-phospho-beta-D-ribosylamino)methylideneamino]imidazole-4-carboxamide = 5-[(5-phospho-1-deoxy-D-ribulos-1-ylimino)methylamino]-1-(5-phospho-beta-D-ribosyl)imidazole-4-carboxamide. It functions in the pathway amino-acid biosynthesis; L-histidine biosynthesis; L-histidine from 5-phospho-alpha-D-ribose 1-diphosphate: step 4/9. This chain is 1-(5-phosphoribosyl)-5-[(5-phosphoribosylamino)methylideneamino] imidazole-4-carboxamide isomerase, found in Staphylococcus aureus (strain MRSA252).